The primary structure comprises 485 residues: uncharacterized protein (485 aa).

An N-terminal signal peptide occupies residues 1-23; it reads MRRRVCTVVRAVVCLLSTSLLTT. The N-palmitoyl cysteine moiety is linked to residue C24. The S-diacylglycerol cysteine moiety is linked to residue C24. Positions 308–327 are enriched in low complexity; the sequence is SAASSPAQCPSSPSSSSSSS. The interval 308–331 is disordered; that stretch reads SAASSPAQCPSSPSSSSSSSTNAG.

It belongs to the TP013X lipoprotein family.

Its subcellular location is the cell membrane. This is an uncharacterized protein from Treponema pallidum (strain Nichols).